Here is a 788-residue protein sequence, read N- to C-terminus: Leucine-rich repeat and fibronectin type-III domain-containing protein 2 (788 aa).

An N-terminal signal peptide occupies residues 1-20 (METLLGGLLAFGMAFAVVDA). Residues 21-52 (CPKYCVCQNLSESLGTLCPSKGLLFVPPDIDR) enclose the LRRNT domain. The Extracellular portion of the chain corresponds to 21-534 (CPKYCVCQNL…MHSQILGGTM (514 aa)). N-linked (GlcNAc...) asparagine glycans are attached at residues N29 and N74. LRR repeat units follow at residues 53–74 (RTVE…DFAN), 77–98 (GLVD…SFLD), 101–122 (SLRS…TLRG), 125–146 (NLQH…AFED), 150–171 (TLED…SVRR), 174–195 (NLHQ…TFAD), and 198–219 (KLAR…PIFA). Positions 242-288 (NPLHCNCELLWLRRLERDDDLKTCGSPGGLKGRYFWHIREEEFVCEP) constitute an LRRCT domain. Residues 289–375 (PLITQHTHKL…GEATATVEVS (87 aa)) enclose the Ig-like domain. C310 and C359 are disulfide-bonded. N-linked (GlcNAc...) asparagine glycans are attached at residues N332, N341, N384, and N457. The segment at 383 to 423 (SNSTSRMAPPKSRLSDITGSSKTSRGGGGSGAGEPPKSTPE) is disordered. The Fibronectin type-III domain maps to 422–518 (PERAVLVSDV…GCAQFFTKAD (97 aa)). A helical transmembrane segment spans residues 535-555 (ILVIGGIIVATLLVFIVILMV). Over 556–788 (RYKVCNHDAP…SSEWVMESTV (233 aa)) the chain is Cytoplasmic. Positions 620-641 (CDSSSSSSLGSGEAAGLSRGPW) are enriched in low complexity. Disordered regions lie at residues 620-655 (CDSS…PSLD) and 668-707 (SQRK…ATRA). Residues 642-651 (RLPPPAPRPK) show a composition bias toward pro residues. Residues 785 to 788 (ESTV) carry the PDZ-binding motif.

The protein belongs to the LRFN family. In terms of assembly, forms heteromeric complexes with LRFN1, LRFN3 and LRFN4. Can form homomeric complexes, but not across cell junctions. Can form heteromeric complexes with LRFN5. Interacts with DLG1, DLG3 and DLG4; interaction with DLG4 is mediated by the PDZ-binding domain. Also interacts with DLG2. Interacts with 2 NMDA receptor subunits GRIN1 and GRIN2A.

Its subcellular location is the membrane. The protein resides in the synapse. It is found in the postsynaptic cell membrane. Functionally, promotes neurite outgrowth in hippocampal neurons. Enhances the cell surface expression of GRIN1 and GRIN2A NMDA receptor subunits. May play a role in redistributing DLG4 to the cell periphery. This chain is Leucine-rich repeat and fibronectin type-III domain-containing protein 2 (Lrfn2), found in Rattus norvegicus (Rat).